The following is a 479-amino-acid chain: Heparin cofactor 2 (479 aa).

A signal peptide spans M1–L23. N31 is a glycosylation site (N-linked (GlcNAc...) asparagine). Tandem repeats lie at residues G55–E65 and S69–D79. Positions G55 to D79 are 2 X 11 AA approximate repeats, Asp/Glu-rich (acidic) (hirudin-like). Y61 and Y74 each carry sulfotyrosine. N168 carries N-linked (GlcNAc...) asparagine glycosylation. The segment at K172–R192 is glycosaminoglycan-binding site. N-linked (GlcNAc...) asparagine glycosylation is found at N367 and N403.

The protein belongs to the serpin family. Post-translationally, different composition of the N-linked oligosaccharides appears to yield a 68-kDa and a 72-kDa form.

Its function is as follows. Thrombin inhibitor activated by the glycosaminoglycans, heparin or dermatan sulfate. In the presence of the latter, HC-II becomes the predominant thrombin inhibitor in place of antithrombin III (AT). The sequence is that of Heparin cofactor 2 (Serpind1) from Rattus norvegicus (Rat).